A 314-amino-acid polypeptide reads, in one-letter code: Transmembrane protein 248 (314 aa).

The chain crosses the membrane as a helical span at residues 21-41 (VVFMISVSAMAIAFLTLGYFF). The interval 78 to 106 (LTNDTTTPESTMTSGQARASTQSPQALED) is disordered. Residues 80–102 (NDTTTPESTMTSGQARASTQSPQ) show a composition bias toward polar residues. The next 3 helical transmembrane spans lie at 179-199 (QVVF…PVTV), 236-258 (FWCY…TVIV), and 270-290 (LMHT…YAVI).

This sequence belongs to the TMEM248 family.

It is found in the membrane. This chain is Transmembrane protein 248 (TMEM248), found in Homo sapiens (Human).